The primary structure comprises 182 residues: Methionine-R-sulfoxide reductase B2, mitochondrial (182 aa).

The N-terminal 20 residues, 1–20 (MARLLWLLRGLTLGTAPRRA), are a transit peptide targeting the mitochondrion. One can recognise a MsrB domain in the interval 51–180 (KSEWQKKLTP…NSVALKFKPR (130 aa)). Zn(2+) is bound by residues cysteine 90, cysteine 93, cysteine 146, and cysteine 149. The active-site Nucleophile is cysteine 169.

It belongs to the MsrB Met sulfoxide reductase family. As to quaternary structure, interacts with DAOA; the interaction is direct. Zn(2+) is required as a cofactor. In terms of tissue distribution, ubiquitous. Detected in retina, ocular ciliary body, skeletal muscle, heart, colon, bone marrow, cerebellum, small intestine, fetal brain, fetal liver, kidney, spinal cord, lung, placenta and prostate.

Its subcellular location is the mitochondrion. The enzyme catalyses L-methionyl-[protein] + [thioredoxin]-disulfide + H2O = L-methionyl-(R)-S-oxide-[protein] + [thioredoxin]-dithiol. It catalyses the reaction [thioredoxin]-disulfide + L-methionine + H2O = L-methionine (R)-S-oxide + [thioredoxin]-dithiol. Methionine-sulfoxide reductase that specifically reduces methionine (R)-sulfoxide back to methionine. While in many cases, methionine oxidation is the result of random oxidation following oxidative stress, methionine oxidation is also a post-translational modification that takes place on specific residue. Upon oxidative stress, may play a role in the preservation of mitochondrial integrity by decreasing the intracellular reactive oxygen species build-up through its scavenging role, hence contributing to cell survival and protein maintenance. The chain is Methionine-R-sulfoxide reductase B2, mitochondrial (MSRB2) from Homo sapiens (Human).